Reading from the N-terminus, the 272-residue chain is 3-methyl-2-oxobutanoate hydroxymethyltransferase (272 aa).

Residues Asp52 and Asp91 each contribute to the Mg(2+) site. 3-methyl-2-oxobutanoate is bound by residues 52–53 (DS), Asp91, and Lys121. A Mg(2+)-binding site is contributed by Glu123. Glu190 serves as the catalytic Proton acceptor.

The protein belongs to the PanB family. As to quaternary structure, homodecamer; pentamer of dimers. Mg(2+) is required as a cofactor.

It localises to the cytoplasm. The catalysed reaction is 3-methyl-2-oxobutanoate + (6R)-5,10-methylene-5,6,7,8-tetrahydrofolate + H2O = 2-dehydropantoate + (6S)-5,6,7,8-tetrahydrofolate. The protein operates within cofactor biosynthesis; (R)-pantothenate biosynthesis; (R)-pantoate from 3-methyl-2-oxobutanoate: step 1/2. Its function is as follows. Catalyzes the reversible reaction in which hydroxymethyl group from 5,10-methylenetetrahydrofolate is transferred onto alpha-ketoisovalerate to form ketopantoate. The polypeptide is 3-methyl-2-oxobutanoate hydroxymethyltransferase (Flavobacterium johnsoniae (strain ATCC 17061 / DSM 2064 / JCM 8514 / BCRC 14874 / CCUG 350202 / NBRC 14942 / NCIMB 11054 / UW101) (Cytophaga johnsonae)).